The chain runs to 194 residues: Fe/S biogenesis protein NfuA (194 aa).

Positions 152 and 155 each coordinate [4Fe-4S] cluster.

The protein belongs to the NfuA family. In terms of assembly, homodimer. [4Fe-4S] cluster is required as a cofactor.

Involved in iron-sulfur cluster biogenesis. Binds a 4Fe-4S cluster, can transfer this cluster to apoproteins, and thereby intervenes in the maturation of Fe/S proteins. Could also act as a scaffold/chaperone for damaged Fe/S proteins. This chain is Fe/S biogenesis protein NfuA, found in Pseudomonas putida (strain GB-1).